The primary structure comprises 406 residues: Odorant receptor 10a (406 aa).

Residues Met-1–Leu-45 lie on the Cytoplasmic side of the membrane. The chain crosses the membrane as a helical span at residues Ile-46 to Leu-66. The Extracellular segment spans residues Asp-67–Ala-74. A helical transmembrane segment spans residues Leu-75–Leu-95. Topologically, residues Arg-96–Ala-143 are cytoplasmic. The chain crosses the membrane as a helical span at residues Gly-144–Leu-164. Over Gln-165–Pro-189 the chain is Extracellular. Asn-178 carries N-linked (GlcNAc...) asparagine glycosylation. A helical transmembrane segment spans residues Phe-190–Gly-210. At Gly-211–Thr-281 the chain is on the cytoplasmic side. Residues Ile-282–Leu-302 traverse the membrane as a helical segment. At Leu-303–Asn-308 the chain is on the extracellular side. A helical membrane pass occupies residues Gly-309 to Tyr-329. At Cys-330–Arg-372 the chain is on the cytoplasmic side. A helical transmembrane segment spans residues Pro-373–Gln-393. Residues Thr-394–Gln-406 lie on the Extracellular side of the membrane.

This sequence belongs to the insect chemoreceptor superfamily. Heteromeric odorant receptor channel (TC 1.A.69) family. Or1a subfamily. As to quaternary structure, interacts with Orco. Complexes exist early in the endomembrane system in olfactory sensory neurons (OSNs), coupling these complexes to the conserved ciliary trafficking pathway. Expressed in olfactory sensory neurons in the antenna.

The protein localises to the cell membrane. Odorant receptor which mediates acceptance or avoidance behavior, depending on its substrates. The odorant receptor repertoire encodes a large collection of odor stimuli that vary widely in identity, intensity, and duration. May form a complex with Orco to form odorant-sensing units, providing sensitive and prolonged odorant signaling and calcium permeability. Involved in the behavioral responses to esters, and specifically to ethyl hexanoate, benzaldehyde, and acetophenone. The chain is Odorant receptor 10a (Or10a) from Drosophila melanogaster (Fruit fly).